A 79-amino-acid polypeptide reads, in one-letter code: Small ribosomal subunit protein bS18 (79 aa).

It belongs to the bacterial ribosomal protein bS18 family. Part of the 30S ribosomal subunit. Forms a tight heterodimer with protein bS6.

Binds as a heterodimer with protein bS6 to the central domain of the 16S rRNA, where it helps stabilize the platform of the 30S subunit. This is Small ribosomal subunit protein bS18 from Ureaplasma urealyticum serovar 10 (strain ATCC 33699 / Western).